Reading from the N-terminus, the 472-residue chain is Coronin-6 (472 aa).

5 WD repeats span residues 79 to 119, 129 to 169, 173 to 212, 216 to 259, and 264 to 304; these read GHTG…PVRN, GHSK…VLLS, IHPDVIHSVCWNSNGSLLATTCKDKTLRIIDPRKSQVVAE, AHEG…EPVA, and DTSN…PFVH. Residues 409–434 are disordered; sequence NILDVRPPASPRRSQSASEAPLSQQH. Low complexity predominate over residues 419–429; the sequence is PRRSQSASEAP. Positions 430-469 form a coiled coil; it reads LSQQHTLETLLEEMKALRERVQAQEERITALENMLCELVD.

The sequence is that of Coronin-6 (Coro6) from Rattus norvegicus (Rat).